The primary structure comprises 60 residues: Small ribosomal subunit protein bS21 (60 aa).

The segment at 39–60 (ETPQEKRKRKAVARRRQRTRRR) is disordered. The span at 44–60 (KRKRKAVARRRQRTRRR) shows a compositional bias: basic residues.

It belongs to the bacterial ribosomal protein bS21 family.

This is Small ribosomal subunit protein bS21 from Microcystis aeruginosa (strain NIES-843 / IAM M-2473).